Consider the following 69-residue polypeptide: Rubredoxin-1 (69 aa).

Residues 14–69 (QASWMCAECGYIYDPAEGNLETNIRPGMPFDKLPDDWSCPVCNHPKNQFTKFISQL) enclose the Rubredoxin-like domain. 4 residues coordinate Fe cation: C19, C22, C52, and C55.

This sequence belongs to the rubredoxin family. In terms of assembly, monomer. Requires Fe(3+) as cofactor.

In terms of biological role, serves as an electron acceptor for pyruvate ferredoxin oxidoreductase (PFOR). The protein is Rubredoxin-1 (rub1) of Chlorobaculum tepidum (strain ATCC 49652 / DSM 12025 / NBRC 103806 / TLS) (Chlorobium tepidum).